The sequence spans 283 residues: Protein BASIC PENTACYSTEINE5 (283 aa).

Residues 51-86 (AVKERNEAVAATKEALASRDEALEQRDKALSERDNA) are alanine-zipper. The stretch at 63 to 89 (KEALASRDEALEQRDKALSERDNAIME) forms a coiled coil. Residues 122 to 176 (EESHLPNPSPISTIPPEAANTRPTKRKKESKQGKKMGEDLNRPVASPGKKSRKDW) form a disordered region. Residues 151–162 (SKQGKKMGEDLN) are compositionally biased toward basic and acidic residues.

It belongs to the BBR/BPC family. As to quaternary structure, homodimer. Heterodimer. Expressed in seedlings, leaves and pistils.

It is found in the nucleus. In terms of biological role, transcriptional regulator that specifically binds to GA-rich elements (GAGA-repeats) present in regulatory sequences of genes involved in developmental processes. This is Protein BASIC PENTACYSTEINE5 (BPC5) from Arabidopsis thaliana (Mouse-ear cress).